Reading from the N-terminus, the 311-residue chain is Methionyl-tRNA formyltransferase (311 aa).

109–112 (SLLP) serves as a coordination point for (6S)-5,6,7,8-tetrahydrofolate.

This sequence belongs to the Fmt family.

It carries out the reaction L-methionyl-tRNA(fMet) + (6R)-10-formyltetrahydrofolate = N-formyl-L-methionyl-tRNA(fMet) + (6S)-5,6,7,8-tetrahydrofolate + H(+). Attaches a formyl group to the free amino group of methionyl-tRNA(fMet). The formyl group appears to play a dual role in the initiator identity of N-formylmethionyl-tRNA by promoting its recognition by IF2 and preventing the misappropriation of this tRNA by the elongation apparatus. This is Methionyl-tRNA formyltransferase from Moorella thermoacetica (strain ATCC 39073 / JCM 9320).